Consider the following 574-residue polypeptide: Zinc finger protein 394 (574 aa).

A Phosphoserine modification is found at Ser-12. A Glycyl lysine isopeptide (Lys-Gly) (interchain with G-Cter in SUMO2) cross-link involves residue Lys-40. Residues 64–146 enclose the SCAN box domain; sequence RLHFRQLRYQ…AVVRALQRAL (83 aa). One can recognise a KRAB domain in the interval 155 to 230; sequence VTFEDMAVSL…LQEAFQGKHP (76 aa). Positions 182–202 are disordered; it reads ESAQKDSGSTVPPSLESRVEN. Residues Lys-203, Lys-228, and Lys-254 each participate in a glycyl lysine isopeptide (Lys-Gly) (interchain with G-Cter in SUMO2) cross-link. Positions 231–284 are disordered; that stretch reads LFSKCGSTHEDRVEKQSGNPLPLKLENSAEAEGLNSISDVNKNGSIEGEDSKNN. Over residues 265-274 the composition is skewed to polar residues; the sequence is NSISDVNKNG. Lys-282 is covalently cross-linked (Glycyl lysine isopeptide (Lys-Gly) (interchain with G-Cter in SUMO2)). 7 consecutive C2H2-type zinc fingers follow at residues 358 to 380, 386 to 408, 414 to 436, 442 to 463, 469 to 491, 497 to 519, and 525 to 547; these read YKCG…QRIH, YGCQ…QRTH, YTCL…QSTH, FKCE…QRLH, YKCE…HRIH, YGCS…QRIH, and YKCL…QRIH. Lys-443 is covalently cross-linked (Glycyl lysine isopeptide (Lys-Gly) (interchain with G-Cter in SUMO2)).

Belongs to the krueppel C2H2-type zinc-finger protein family.

It is found in the nucleus. In terms of biological role, may be involved in transcriptional regulation. The chain is Zinc finger protein 394 (ZNF394) from Pongo abelii (Sumatran orangutan).